A 43-amino-acid polypeptide reads, in one-letter code: Omega-ctenitoxin-Pr1a (43 aa).

4 cysteine pairs are disulfide-bonded: Cys2/Cys17, Cys9/Cys22, Cys16/Cys33, and Cys24/Cys31. Gly43 is subject to Glycine amide.

Expressed by the venom gland.

Its subcellular location is the secreted. In terms of biological role, inhibits high-voltage activated calcium channels. Shifts the voltage-dependence for activation towards hyperpolarized membrane potentials for L- (Cav1), P/Q- (Cav2.1/CACNA1A) and R-type (Cav2.3/CACNA1E) calcium currents. Causes immediate agitation and clockwise gyration, followed by the gradual development of general flaccid paralysis when injected intracerebroventricular into mice at dose levels of 5 ug per mouse. The chain is Omega-ctenitoxin-Pr1a from Phoneutria reidyi (Brazilian Amazonian armed spider).